We begin with the raw amino-acid sequence, 128 residues long: Large ribosomal subunit protein uL24 (128 aa).

The protein belongs to the universal ribosomal protein uL24 family. As to quaternary structure, part of the 50S ribosomal subunit.

Functionally, one of two assembly initiator proteins, it binds directly to the 5'-end of the 23S rRNA, where it nucleates assembly of the 50S subunit. In terms of biological role, located at the polypeptide exit tunnel on the outside of the subunit. The protein is Large ribosomal subunit protein uL24 of Pyrobaculum calidifontis (strain DSM 21063 / JCM 11548 / VA1).